Reading from the N-terminus, the 433-residue chain is Probable M18 family aminopeptidase 2 (433 aa).

The Zn(2+) site is built by His-79, His-153, and His-404.

The protein belongs to the peptidase M18 family. Requires Zn(2+) as cofactor.

This is Probable M18 family aminopeptidase 2 (apeB) from Mycobacterium bovis (strain ATCC BAA-935 / AF2122/97).